Here is a 283-residue protein sequence, read N- to C-terminus: MLIIETLPLLRQQIRRLRMEGKRVALVPTMGNLHDGHMKLVDEAKARADVVVVSIFVNPMQFDRPEDLARYPRTLQEDCEKLNKRKVDLVFAPSVKEIYPNGTETHTYVDVPGLSTMLEGASRPGHFRGVSTIVSKLFNLVQPDIACFGEKDFQQLALIRKMVADMGFDIEIVGVPIMRAKDGLALSSRNGYLTAEQRKIAPGLYKVLSSIADKLQAGERDLDEIITIAGQELNEKGFRADDIQIRDADTLLEVSENSKRAVILVAAWLGDARLIDNKIVELV.

30–37 serves as a coordination point for ATP; that stretch reads MGNLHDGH. The active-site Proton donor is the His-37. Residue Gln-61 participates in (R)-pantoate binding. Gln-61 lines the beta-alanine pocket. 149–152 contacts ATP; that stretch reads GEKD. Gln-155 contacts (R)-pantoate. Position 186–189 (186–189) interacts with ATP; the sequence is LSSR.

Belongs to the pantothenate synthetase family. In terms of assembly, homodimer.

Its subcellular location is the cytoplasm. It carries out the reaction (R)-pantoate + beta-alanine + ATP = (R)-pantothenate + AMP + diphosphate + H(+). Its pathway is cofactor biosynthesis; (R)-pantothenate biosynthesis; (R)-pantothenate from (R)-pantoate and beta-alanine: step 1/1. Its function is as follows. Catalyzes the condensation of pantoate with beta-alanine in an ATP-dependent reaction via a pantoyl-adenylate intermediate. The polypeptide is Pantothenate synthetase (Escherichia coli O17:K52:H18 (strain UMN026 / ExPEC)).